Reading from the N-terminus, the 92-residue chain is Small ribosomal subunit protein uS19 (92 aa).

The protein belongs to the universal ribosomal protein uS19 family.

In terms of biological role, protein S19 forms a complex with S13 that binds strongly to the 16S ribosomal RNA. The sequence is that of Small ribosomal subunit protein uS19 from Rhodopseudomonas palustris (strain BisB18).